We begin with the raw amino-acid sequence, 493 residues long: Transcript termination protein A18 (493 aa).

A Helicase ATP-binding domain is found at 100–256; that stretch reads MIELKRPLYI…NSIINIAKLS (157 aa). 113-120 is a binding site for ATP; that stretch reads LACGFGKT. Positions 206–209 match the DESH box motif; the sequence is DESH.

This sequence belongs to the helicase family. Poxviruses subfamily. In terms of assembly, interacts with G2. Might be part of a transcription complex composed at least of G2, A18, and H5.

It is found in the virion. Its function is as follows. DNA helicase which seems to act as a postreplicative transcription termination factor. Involved in ATP-dependent release of nascent RNA. Forms a stable complex with single-stranded DNA, and to a lesser extent RNA. The sequence is that of Transcript termination protein A18 from Cowpox virus (strain GRI-90 / Grishak) (CPV).